We begin with the raw amino-acid sequence, 304 residues long: HTH-type transcriptional activator CmpR (304 aa).

Positions 1 to 61 (MKNATLHQFE…EQIGRKIYLT (61 aa)) constitute an HTH lysR-type domain. Positions 21 to 40 (FTKAAEELFLTQPTVSQQMK) form a DNA-binding region, H-T-H motif.

It belongs to the LysR transcriptional regulatory family.

The protein localises to the cytoplasm. Functionally, activates transcription of the cmpABCD operon under carbon dioxide-limited conditions. Specifically binds to the cmpR-cmpA intergenic region. This chain is HTH-type transcriptional activator CmpR (cmpR), found in Synechocystis sp. (strain ATCC 27184 / PCC 6803 / Kazusa).